Consider the following 809-residue polypeptide: TPR repeat-containing protein TP_0920 (809 aa).

Residues 103–125 (PGEARALPNSEQPEVPASLDSTS) are disordered. TPR repeat units follow at residues 315–348 (LREYLLAGDIACAQHLYDEAEEAFNAALVQDPHC), 383–416 (AFLSNLCGHLALAQNRHEDAAAAYQRAFRLDPHQ), 418–450 (LFALHAAQELSLLGEKEQAIQAYLHAARLFLAQ), 471–504 (TEVRSIAGKLYYATGRHRQAHTQFDALCRAGSAD), 513–550 (LLLREAQGTHEHDAPAAAACEQRARDAFQRACALAPDC), 552–582 (LYHFKYAESLFLSEKDCDEPLARALALDPDN), 583–616 (GWLHNLCAQKALREQNFDAAAQSLQRARALLPHE), 656–689 (GQAFHLLANAFYADGCYEHAAPWYDKALREEPQN), and 723–756 (AHVYTLIALVAAQLGDFPRAELTLQEACTLWPQC).

The polypeptide is TPR repeat-containing protein TP_0920 (Treponema pallidum (strain Nichols)).